A 172-amino-acid chain; its full sequence is Water stress-inducible protein Rab21 (172 aa).

The disordered stretch occupies residues 1-172 (MEHQGQHGHV…KIKEKLPGQH (172 aa)). The stretch at 3–28 (HQGQHGHVTSRVDEYGNPVGTGAGHG) is one Type A repeat. Residues 21–65 (VGTGAGHGQMGTAGMGTHGTTGGMGTHGTTGGMGTHGTTGTGGGQ) are compositionally biased toward gly residues. The stretch at 98–115 (RRKKGIKEKIKEKLPGGN) is one Type B repeat. The span at 124–139 (GGTGGAYGQQGHGTGM) shows a compositional bias: gly residues. The Type A repeat unit spans residues 125-149 (GTGGAYGQQGHGTGMTTGTTGAHGT). Over residues 140 to 153 (TTGTTGAHGTTTTD) the composition is skewed to low complexity. The segment covering 154 to 172 (TGEKKGIMDKIKEKLPGQH) has biased composition (basic and acidic residues). Residues 156–172 (EKKGIMDKIKEKLPGQH) form a Type B repeat.

Belongs to the plant dehydrin family.

It is found in the cytoplasm. In Oryza sativa subsp. indica (Rice), this protein is Water stress-inducible protein Rab21 (RAB21).